Here is a 165-residue protein sequence, read N- to C-terminus: Endoribonuclease YbeY (165 aa).

Positions 130, 134, and 140 each coordinate Zn(2+).

Belongs to the endoribonuclease YbeY family. The cofactor is Zn(2+).

Its subcellular location is the cytoplasm. Its function is as follows. Single strand-specific metallo-endoribonuclease involved in late-stage 70S ribosome quality control and in maturation of the 3' terminus of the 16S rRNA. The sequence is that of Endoribonuclease YbeY from Streptococcus agalactiae serotype Ia (strain ATCC 27591 / A909 / CDC SS700).